Reading from the N-terminus, the 144-residue chain is Transcriptional regulator SlyA (144 aa).

Positions 2 to 135 (ESPLGSDLAR…LIKLIAKLEH (134 aa)) constitute an HTH marR-type domain. Residues 49–72 (QIQLAKAIGIEQPSLVRTLDQLEE) constitute a DNA-binding region (H-T-H motif).

This sequence belongs to the SlyA family. Homodimer.

Transcription regulator that can specifically activate or repress expression of target genes. This Escherichia coli O127:H6 (strain E2348/69 / EPEC) protein is Transcriptional regulator SlyA.